Reading from the N-terminus, the 252-residue chain is UPF0246 protein Fjoh_4905 (252 aa).

The protein belongs to the UPF0246 family.

The protein is UPF0246 protein Fjoh_4905 of Flavobacterium johnsoniae (strain ATCC 17061 / DSM 2064 / JCM 8514 / BCRC 14874 / CCUG 350202 / NBRC 14942 / NCIMB 11054 / UW101) (Cytophaga johnsonae).